The chain runs to 549 residues: Arginine--tRNA ligase (549 aa).

The short motif at 132–142 (ANPTGPLHLAH) is the 'HIGH' region element.

This sequence belongs to the class-I aminoacyl-tRNA synthetase family. Monomer.

It is found in the cytoplasm. The enzyme catalyses tRNA(Arg) + L-arginine + ATP = L-arginyl-tRNA(Arg) + AMP + diphosphate. The polypeptide is Arginine--tRNA ligase (Renibacterium salmoninarum (strain ATCC 33209 / DSM 20767 / JCM 11484 / NBRC 15589 / NCIMB 2235)).